The chain runs to 93 residues: Small ribosomal subunit protein uS15c (93 aa).

This sequence belongs to the universal ribosomal protein uS15 family. Part of the 30S ribosomal subunit.

It localises to the plastid. It is found in the chloroplast. The sequence is that of Small ribosomal subunit protein uS15c (rps15) from Jasminum nudiflorum (Winter jasmine).